The sequence spans 98 residues: Cystatin-A (98 aa).

Residue Met-1 is modified to N-acetylmethionine. Positions Gln-46–Gly-50 match the Secondary area of contact motif.

Belongs to the cystatin family.

It localises to the cytoplasm. In terms of biological role, this is an intracellular thiol proteinase inhibitor. The sequence is that of Cystatin-A (CSTA) from Felis catus (Cat).